The sequence spans 313 residues: UPF0252 protein AF_0384 (313 aa).

Belongs to the UPF0252 family.

This is UPF0252 protein AF_0384 from Archaeoglobus fulgidus (strain ATCC 49558 / DSM 4304 / JCM 9628 / NBRC 100126 / VC-16).